The primary structure comprises 471 residues: ATP synthase subunit beta (471 aa).

153-160 (GGAGVGKT) is a binding site for ATP.

It belongs to the ATPase alpha/beta chains family. As to quaternary structure, F-type ATPases have 2 components, CF(1) - the catalytic core - and CF(0) - the membrane proton channel. CF(1) has five subunits: alpha(3), beta(3), gamma(1), delta(1), epsilon(1). CF(0) has three main subunits: a(1), b(2) and c(9-12). The alpha and beta chains form an alternating ring which encloses part of the gamma chain. CF(1) is attached to CF(0) by a central stalk formed by the gamma and epsilon chains, while a peripheral stalk is formed by the delta and b chains.

It localises to the cell membrane. It carries out the reaction ATP + H2O + 4 H(+)(in) = ADP + phosphate + 5 H(+)(out). Functionally, produces ATP from ADP in the presence of a proton gradient across the membrane. The catalytic sites are hosted primarily by the beta subunits. The sequence is that of ATP synthase subunit beta from Levilactobacillus brevis (strain ATCC 367 / BCRC 12310 / CIP 105137 / JCM 1170 / LMG 11437 / NCIMB 947 / NCTC 947) (Lactobacillus brevis).